The chain runs to 26 residues: Toxin TdII-1 (26 aa).

This sequence belongs to the long (4 C-C) scorpion toxin superfamily. Sodium channel inhibitor family. Beta subfamily. Expressed by the venom gland.

The protein resides in the secreted. In terms of biological role, beta toxins bind voltage-independently at site-4 of sodium channels (Nav) and shift the voltage of activation toward more negative potentials thereby affecting sodium channel activation and promoting spontaneous and repetitive firing. This toxin is active against mammals and crustaceans. This chain is Toxin TdII-1, found in Tityus discrepans (Venezuelan scorpion).